The sequence spans 299 residues: Serine/threonine-protein kinase 1 (299 aa).

The 239-residue stretch at 39 to 277 folds into the Protein kinase domain; sequence IATKPMFEGG…FKGLVSHPWF (239 aa). Residues 45–53 and Lys-66 contribute to the ATP site; that span reads FEGGRRNNV. The active-site Proton acceptor is Asp-153.

The protein belongs to the protein kinase superfamily. Ser/Thr protein kinase family.

The protein resides in the virion. Its subcellular location is the host cytoplasm. The catalysed reaction is L-seryl-[protein] + ATP = O-phospho-L-seryl-[protein] + ADP + H(+). It catalyses the reaction L-threonyl-[protein] + ATP = O-phospho-L-threonyl-[protein] + ADP + H(+). Its function is as follows. Essential for viral replication. It may mediate the virus progression through DNA replication. The sequence is that of Serine/threonine-protein kinase 1 from African swine fever virus (isolate Pig/Kenya/KEN-50/1950) (ASFV).